The following is a 480-amino-acid chain: NADH-quinone oxidoreductase subunit N (480 aa).

13 consecutive transmembrane segments (helical) span residues valine 11 to valine 31, isoleucine 38 to alanine 58, glycine 74 to serine 94, tyrosine 109 to leucine 129, phenylalanine 163 to isoleucine 183, glycine 200 to phenylalanine 220, proline 239 to methionine 259, tryptophan 273 to isoleucine 293, methionine 301 to threonine 321, leucine 329 to leucine 349, phenylalanine 372 to phenylalanine 392, valine 405 to tyrosine 425, and valine 451 to methionine 471.

The protein belongs to the complex I subunit 2 family. NDH-1 is composed of 14 different subunits. Subunits NuoA, H, J, K, L, M, N constitute the membrane sector of the complex.

Its subcellular location is the cell inner membrane. It carries out the reaction a quinone + NADH + 5 H(+)(in) = a quinol + NAD(+) + 4 H(+)(out). Functionally, NDH-1 shuttles electrons from NADH, via FMN and iron-sulfur (Fe-S) centers, to quinones in the respiratory chain. The immediate electron acceptor for the enzyme in this species is believed to be ubiquinone. Couples the redox reaction to proton translocation (for every two electrons transferred, four hydrogen ions are translocated across the cytoplasmic membrane), and thus conserves the redox energy in a proton gradient. In Thioalkalivibrio sulfidiphilus (strain HL-EbGR7), this protein is NADH-quinone oxidoreductase subunit N.